A 306-amino-acid chain; its full sequence is Oxygen-dependent coproporphyrinogen-III oxidase (306 aa).

Serine 93 contributes to the substrate binding site. A divalent metal cation contacts are provided by histidine 97 and histidine 107. Catalysis depends on histidine 107, which acts as the Proton donor. 109-111 (NVR) provides a ligand contact to substrate. Positions 146 and 176 each coordinate a divalent metal cation. The interval 241 to 276 (YVEYNLVYDRGTLFGLQSGGRTESILMSLPPQVAWG) is important for dimerization. 259-261 (GGR) is a binding site for substrate.

This sequence belongs to the aerobic coproporphyrinogen-III oxidase family. In terms of assembly, homodimer. Requires a divalent metal cation as cofactor.

It localises to the cytoplasm. It carries out the reaction coproporphyrinogen III + O2 + 2 H(+) = protoporphyrinogen IX + 2 CO2 + 2 H2O. It participates in porphyrin-containing compound metabolism; protoporphyrin-IX biosynthesis; protoporphyrinogen-IX from coproporphyrinogen-III (O2 route): step 1/1. Its function is as follows. Involved in the heme biosynthesis. Catalyzes the aerobic oxidative decarboxylation of propionate groups of rings A and B of coproporphyrinogen-III to yield the vinyl groups in protoporphyrinogen-IX. The protein is Oxygen-dependent coproporphyrinogen-III oxidase of Stutzerimonas stutzeri (strain A1501) (Pseudomonas stutzeri).